A 98-amino-acid chain; its full sequence is MSPMYFSFSSAFMLGLMGLAFNRSHLLSALLCLEGMMLTLFVATATWSLMLNSTSSSILPMILLTFSACEASAGLAILVATSRSHGSDNLQNLNLLQC.

Transmembrane regions (helical) follow at residues M1 to F21, L26 to T46, and I58 to L78.

This sequence belongs to the complex I subunit 4L family.

It localises to the mitochondrion membrane. It catalyses the reaction a ubiquinone + NADH + 5 H(+)(in) = a ubiquinol + NAD(+) + 4 H(+)(out). Core subunit of the mitochondrial membrane respiratory chain NADH dehydrogenase (Complex I) which catalyzes electron transfer from NADH through the respiratory chain, using ubiquinone as an electron acceptor. Part of the enzyme membrane arm which is embedded in the lipid bilayer and involved in proton translocation. This chain is NADH-ubiquinone oxidoreductase chain 4L (MT-ND4L), found in Scyliorhinus canicula (Small-spotted catshark).